Consider the following 221-residue polypeptide: Phosphoribosylformylglycinamidine synthase subunit PurQ (221 aa).

The region spanning 6 to 221 (VGVVVFPGSN…LFTLKSLILK (216 aa)) is the Glutamine amidotransferase type-1 domain. Cys89 (nucleophile) is an active-site residue. Residues His197 and Glu199 contribute to the active site.

Part of the FGAM synthase complex composed of 1 PurL, 1 PurQ and 2 PurS subunits.

Its subcellular location is the cytoplasm. It catalyses the reaction N(2)-formyl-N(1)-(5-phospho-beta-D-ribosyl)glycinamide + L-glutamine + ATP + H2O = 2-formamido-N(1)-(5-O-phospho-beta-D-ribosyl)acetamidine + L-glutamate + ADP + phosphate + H(+). It carries out the reaction L-glutamine + H2O = L-glutamate + NH4(+). It functions in the pathway purine metabolism; IMP biosynthesis via de novo pathway; 5-amino-1-(5-phospho-D-ribosyl)imidazole from N(2)-formyl-N(1)-(5-phospho-D-ribosyl)glycinamide: step 1/2. Functionally, part of the phosphoribosylformylglycinamidine synthase complex involved in the purines biosynthetic pathway. Catalyzes the ATP-dependent conversion of formylglycinamide ribonucleotide (FGAR) and glutamine to yield formylglycinamidine ribonucleotide (FGAM) and glutamate. The FGAM synthase complex is composed of three subunits. PurQ produces an ammonia molecule by converting glutamine to glutamate. PurL transfers the ammonia molecule to FGAR to form FGAM in an ATP-dependent manner. PurS interacts with PurQ and PurL and is thought to assist in the transfer of the ammonia molecule from PurQ to PurL. The protein is Phosphoribosylformylglycinamidine synthase subunit PurQ of Prochlorococcus marinus (strain MIT 9312).